Reading from the N-terminus, the 487-residue chain is uncharacterized protein (487 aa).

Positions 1-31 are cleaved as a signal peptide; sequence MRFHRQGISAIIGVLLIVLLGFCWKLSGSYG. 8 N-linked (GlcNAc...) asparagine glycosylation sites follow: N40, N68, N150, N220, N304, N367, N442, and N448. The tract at residues 141-176 is disordered; the sequence is LERRHGRFGNGTNGDHPKGPPPPPPPPDEKGRGSQK.

In terms of processing, N-glycosylated.

This is an uncharacterized protein from Saccharomyces cerevisiae (strain ATCC 204508 / S288c) (Baker's yeast).